The sequence spans 360 residues: Nicotinate-nucleotide--dimethylbenzimidazole phosphoribosyltransferase (360 aa).

The Proton acceptor role is filled by glutamate 327.

This sequence belongs to the CobT family.

It catalyses the reaction 5,6-dimethylbenzimidazole + nicotinate beta-D-ribonucleotide = alpha-ribazole 5'-phosphate + nicotinate + H(+). Its pathway is nucleoside biosynthesis; alpha-ribazole biosynthesis; alpha-ribazole from 5,6-dimethylbenzimidazole: step 1/2. Functionally, catalyzes the synthesis of alpha-ribazole-5'-phosphate from nicotinate mononucleotide (NAMN) and 5,6-dimethylbenzimidazole (DMB). The chain is Nicotinate-nucleotide--dimethylbenzimidazole phosphoribosyltransferase from Shewanella baltica (strain OS185).